Here is an 810-residue protein sequence, read N- to C-terminus: Lon protease (810 aa).

The Lon N-terminal domain occupies 16–209; that stretch reads YPVPPLRDIV…RVYAFMEGEI (194 aa). 361 to 368 lines the ATP pocket; that stretch reads GPPGVGKT. The region spanning 598 to 779 is the Lon proteolytic domain; that stretch reads EDLVGVTTGL…DDVLKHALVR (182 aa). Residues S685 and K728 contribute to the active site.

The protein belongs to the peptidase S16 family. In terms of assembly, homohexamer. Organized in a ring with a central cavity.

The protein localises to the cytoplasm. The enzyme catalyses Hydrolysis of proteins in presence of ATP.. Its function is as follows. ATP-dependent serine protease that mediates the selective degradation of mutant and abnormal proteins as well as certain short-lived regulatory proteins. Required for cellular homeostasis and for survival from DNA damage and developmental changes induced by stress. Degrades polypeptides processively to yield small peptide fragments that are 5 to 10 amino acids long. Binds to DNA in a double-stranded, site-specific manner. Involved in iron uptake. This Azospirillum brasilense protein is Lon protease.